The chain runs to 192 residues: MGSLGSKNPQTKQAQVLLLGLDSAGKSTLLYKLKLAKDITTIPTIGFNVEMIELERNLSLTVWDVGGQEKMRTVWGCYCENTDGLVYVVDSTDKQRLEESQRQFEHILKNEHIKNVPVVLLANKQDMPGALTAEDITRMFKVKKLCSDRNWYVQPCCALTGEGLAQGFRKLTGFVKSHMKSRGDTLAFFKQN.

The N-myristoyl glycine moiety is linked to residue glycine 2. GTP is bound by residues 20–27 (GLDSAGKS), 64–68 (DVGGQ), and 123–126 (NKQD).

The protein belongs to the small GTPase superfamily. Arf family. Interacts with ARL14EP. Expressed in immature dendritic cells.

It is found in the cytoplasmic vesicle. Its function is as follows. GTPase that recruits MYO1E to MHC class II-containing vesicles via the effector protein ARL14EP and hence controls the movement of these vesicles along the actin cytoskeleton in dendritic cells. This Homo sapiens (Human) protein is ADP-ribosylation factor-like protein 14 (ARL14).